The chain runs to 156 residues: MSRRNAAVKRPILPDPQFNSRLATMMVARLMQHGKKSTAQRILSDAFGLINERTGGDPLELFETAVKNATPLVEVRARRVGGATYQVPMEVRQERGTAMALRWLVSFSRARNGRSMSQKLAGELMDAANEAGSAVRKREETHKMAEANKAFAHYRY.

This sequence belongs to the universal ribosomal protein uS7 family. In terms of assembly, part of the 30S ribosomal subunit. Contacts proteins S9 and S11.

In terms of biological role, one of the primary rRNA binding proteins, it binds directly to 16S rRNA where it nucleates assembly of the head domain of the 30S subunit. Is located at the subunit interface close to the decoding center, probably blocks exit of the E-site tRNA. In Synechococcus sp. (strain CC9902), this protein is Small ribosomal subunit protein uS7.